The sequence spans 169 residues: Putative phosphoesterase SSP1770 (169 aa).

The active-site Proton donor is the His34. Short sequence motifs (HXTX) lie at residues 34–37 and 115–118; these read HITI and HFTI. His115 functions as the Proton acceptor in the catalytic mechanism.

This sequence belongs to the 2H phosphoesterase superfamily. YjcG family.

The protein is Putative phosphoesterase SSP1770 of Staphylococcus saprophyticus subsp. saprophyticus (strain ATCC 15305 / DSM 20229 / NCIMB 8711 / NCTC 7292 / S-41).